The sequence spans 311 residues: Acetyl-coenzyme A carboxylase carboxyl transferase subunit alpha (311 aa).

One can recognise a CoA carboxyltransferase C-terminal domain in the interval 32 to 289; that stretch reads ELNLLEERLR…KSVLEQKLAQ (258 aa).

Belongs to the AccA family. As to quaternary structure, acetyl-CoA carboxylase is a heterohexamer composed of biotin carboxyl carrier protein (AccB), biotin carboxylase (AccC) and two subunits each of ACCase subunit alpha (AccA) and ACCase subunit beta (AccD).

The protein localises to the cytoplasm. The enzyme catalyses N(6)-carboxybiotinyl-L-lysyl-[protein] + acetyl-CoA = N(6)-biotinyl-L-lysyl-[protein] + malonyl-CoA. It participates in lipid metabolism; malonyl-CoA biosynthesis; malonyl-CoA from acetyl-CoA: step 1/1. Its function is as follows. Component of the acetyl coenzyme A carboxylase (ACC) complex. First, biotin carboxylase catalyzes the carboxylation of biotin on its carrier protein (BCCP) and then the CO(2) group is transferred by the carboxyltransferase to acetyl-CoA to form malonyl-CoA. The protein is Acetyl-coenzyme A carboxylase carboxyl transferase subunit alpha of Exiguobacterium sibiricum (strain DSM 17290 / CCUG 55495 / CIP 109462 / JCM 13490 / 255-15).